A 225-amino-acid polypeptide reads, in one-letter code: ATP-dependent dethiobiotin synthetase BioD (225 aa).

ATP is bound at residue Glu-12 to Tyr-17. Thr-16 lines the Mg(2+) pocket. The active site involves Lys-37. Substrate is bound at residue Ser-41. ATP is bound by residues Asp-55, Glu-122–Gly-125, and Ser-182–Glu-183. 2 residues coordinate Mg(2+): Asp-55 and Glu-122.

This sequence belongs to the dethiobiotin synthetase family. Homodimer. Mg(2+) serves as cofactor.

The protein localises to the cytoplasm. The catalysed reaction is (7R,8S)-7,8-diammoniononanoate + CO2 + ATP = (4R,5S)-dethiobiotin + ADP + phosphate + 3 H(+). It participates in cofactor biosynthesis; biotin biosynthesis; biotin from 7,8-diaminononanoate: step 1/2. Its function is as follows. Catalyzes a mechanistically unusual reaction, the ATP-dependent insertion of CO2 between the N7 and N8 nitrogen atoms of 7,8-diaminopelargonic acid (DAPA, also called 7,8-diammoniononanoate) to form a ureido ring. The chain is ATP-dependent dethiobiotin synthetase BioD from Methylobacterium nodulans (strain LMG 21967 / CNCM I-2342 / ORS 2060).